The chain runs to 390 residues: uncharacterized protein (390 aa).

The next 11 helical transmembrane spans lie at 7-27, 35-55, 77-97, 101-121, 128-148, 161-181, 203-223, 238-258, 281-301, 335-355, and 357-377; these read IYILAIVSFLVGTSEYIISGI, LGITLAAAGQLITIFSLVYAL, LGLFVFGNVLAFVLPGYGWFI, IIMAMGAGVVVVTALTIAAKI, GSAIATVVMGFTASLIIGVPL, VFGAIALLGLIAMVVIFFTLP, VAMGLSITFFWLGGYSVAYTY, LLSGVLLIFGIASLVGSKFGG, LILLSLVTHSYIGVLVILILW, MQFAMAVGAGIGGVFVENVSL, and SITWVGALGVMIAIIASLLIF.

The protein belongs to the major facilitator superfamily.

The protein localises to the cell membrane. This is an uncharacterized protein from Bacillus subtilis (strain 168).